We begin with the raw amino-acid sequence, 296 residues long: Thiamine-monophosphate kinase (296 aa).

Residues Asp-32, Thr-46, and Asp-48 each contribute to the Mg(2+) site. Residue Asp-55 coordinates substrate. Positions 76 and 121 each coordinate Mg(2+). Residues 120-121 (GD) and Arg-144 contribute to the ATP site. Asp-206 is a binding site for Mg(2+). Ser-208 contributes to the ATP binding site. Asp-209 lines the Mg(2+) pocket. Tyr-293 contacts substrate.

It belongs to the thiamine-monophosphate kinase family.

The enzyme catalyses thiamine phosphate + ATP = thiamine diphosphate + ADP. It functions in the pathway cofactor biosynthesis; thiamine diphosphate biosynthesis; thiamine diphosphate from thiamine phosphate: step 1/1. Its function is as follows. Catalyzes the ATP-dependent phosphorylation of thiamine-monophosphate (TMP) to form thiamine-pyrophosphate (TPP), the active form of vitamin B1. The polypeptide is Thiamine-monophosphate kinase (Archaeoglobus fulgidus (strain ATCC 49558 / DSM 4304 / JCM 9628 / NBRC 100126 / VC-16)).